A 513-amino-acid chain; its full sequence is Probable helicase MJ1565 (513 aa).

ATP is bound by residues Arg-151, 160–165 (GMGKSN), and 467–468 (KV).

Belongs to the HerA family.

It carries out the reaction Couples ATP hydrolysis with the unwinding of duplex DNA at the replication fork by translocating in the 5'-3' direction. This creates two antiparallel DNA single strands (ssDNA). The leading ssDNA polymer is the template for DNA polymerase III holoenzyme which synthesizes a continuous strand.. The enzyme catalyses ATP + H2O = ADP + phosphate + H(+). It catalyses the reaction Couples ATP hydrolysis with the unwinding of duplex DNA by translocating in the 3'-5' direction.. Its function is as follows. A probably bidirectional DNA helicase. In Methanocaldococcus jannaschii (strain ATCC 43067 / DSM 2661 / JAL-1 / JCM 10045 / NBRC 100440) (Methanococcus jannaschii), this protein is Probable helicase MJ1565.